Reading from the N-terminus, the 339-residue chain is UPF0324 membrane protein M6_Spy0799 (339 aa).

A run of 9 helical transmembrane segments spans residues 7–24 (KLPG…AWYL), 28–50 (FPII…FYEH), 57–79 (GISF…GLNL), 84–106 (AVGM…VAYG), 118–140 (ATLV…APVI), 150–172 (AISV…GQLL), 256–275 (FILF…SLGV), 290–307 (FIVM…LVKL), and 314–336 (AILL…QLSL).

It belongs to the UPF0324 family.

It is found in the cell membrane. The sequence is that of UPF0324 membrane protein M6_Spy0799 from Streptococcus pyogenes serotype M6 (strain ATCC BAA-946 / MGAS10394).